Consider the following 428-residue polypeptide: Tol-Pal system protein TolB (428 aa).

Residues 1-23 (MRRLYQTVCTLALLLVGLQAAHA) form the signal peptide.

It belongs to the TolB family. As to quaternary structure, the Tol-Pal system is composed of five core proteins: the inner membrane proteins TolA, TolQ and TolR, the periplasmic protein TolB and the outer membrane protein Pal. They form a network linking the inner and outer membranes and the peptidoglycan layer.

It is found in the periplasm. Functionally, part of the Tol-Pal system, which plays a role in outer membrane invagination during cell division and is important for maintaining outer membrane integrity. In Alkalilimnicola ehrlichii (strain ATCC BAA-1101 / DSM 17681 / MLHE-1), this protein is Tol-Pal system protein TolB.